The sequence spans 1011 residues: Protein translocase subunit SecA (1011 aa).

Residues Gln-87, 105 to 109 (GEGKT), and Asp-500 each bind ATP. A disordered region spans residues 969–1011 (SLPLGANPAPARPQPAVMQEQECPCGSGKPFNKCHGGEDEATA). Zn(2+) is bound by residues Cys-991, Cys-993, Cys-1002, and His-1003.

This sequence belongs to the SecA family. In terms of assembly, monomer and homodimer. Part of the essential Sec protein translocation apparatus which comprises SecA, SecYEG and auxiliary proteins SecDF-YajC and YidC. Zn(2+) is required as a cofactor.

Its subcellular location is the cell inner membrane. It is found in the cytoplasm. It catalyses the reaction ATP + H2O + cellular proteinSide 1 = ADP + phosphate + cellular proteinSide 2.. In terms of biological role, part of the Sec protein translocase complex. Interacts with the SecYEG preprotein conducting channel. Has a central role in coupling the hydrolysis of ATP to the transfer of proteins into and across the cell membrane, serving as an ATP-driven molecular motor driving the stepwise translocation of polypeptide chains across the membrane. The polypeptide is Protein translocase subunit SecA (Sorangium cellulosum (strain So ce56) (Polyangium cellulosum (strain So ce56))).